A 73-amino-acid chain; its full sequence is UPF0154 protein BcerKBAB4_3367 (73 aa).

The helical transmembrane segment at 4–24 (WLGILVGVVALVAGVALGFFI) threads the bilayer.

This sequence belongs to the UPF0154 family.

It is found in the cell membrane. In Bacillus mycoides (strain KBAB4) (Bacillus weihenstephanensis), this protein is UPF0154 protein BcerKBAB4_3367.